We begin with the raw amino-acid sequence, 266 residues long: MKTPIAIGAEKKSLITPLPASIDPLRLPEHIAIIMDGNGRWANAKKLPRAMGHSAGVDALKQTLRLCNDWGIGVLTVYAFSTENWSRPKEEVNFLMTLFERVLKKELEALNLEEVQISFLGDLDQLPTRLQDLINEATELTSGNNGIRFNVCTNYGGRRELVLAAQKLAQRVLQGDLDPSFIDEHTFAGELLTSSYADPDLLIRTSGEMRISNFLLWQLAYAEIHVTDTLWPDFDSISLTKALIDYQSRRRRFGGVDPTVNDYDQV.

Residue Asp36 is part of the active site. Position 36 (Asp36) interacts with Mg(2+). Residues 37 to 40 (GNGR), Trp41, Arg49, His53, and 81 to 83 (STE) each bind substrate. The Proton acceptor role is filled by Asn84. Residues Trp85, Arg87, Arg204, and 210–212 (RIS) each bind substrate. Glu223 serves as a coordination point for Mg(2+).

It belongs to the UPP synthase family. As to quaternary structure, homodimer. The cofactor is Mg(2+).

Its function is as follows. Catalyzes the condensation of isopentenyl diphosphate (IPP) with allylic pyrophosphates generating different type of terpenoids. The protein is Isoprenyl transferase of Prochlorococcus marinus (strain SARG / CCMP1375 / SS120).